Reading from the N-terminus, the 190-residue chain is Somatotropin (190 aa).

A Zn(2+)-binding site is contributed by histidine 19. Cysteine 52 and cysteine 163 are joined by a disulfide. At serine 105 the chain carries Phosphoserine. Zn(2+) is bound at residue glutamate 172. A disulfide bond links cysteine 180 and cysteine 188.

It belongs to the somatotropin/prolactin family.

Its subcellular location is the secreted. In terms of biological role, plays an important role in growth control. Its major role in stimulating body growth is to stimulate the liver and other tissues to secrete IGF1. It stimulates both the differentiation and proliferation of myoblasts. It also stimulates amino acid uptake and protein synthesis in muscle and other tissues. This chain is Somatotropin (GH1), found in Balaenoptera borealis (Sei whale).